The following is a 434-amino-acid chain: Innexin-14 (434 aa).

Transmembrane regions (helical) follow at residues 30 to 50 (LFTVYLLGFFVLLTGAKQHFG), 106 to 126 (WVPFFFAFQVCCFLLPFWCWA), 301 to 321 (IFIGLYFWLLVLTALSVIGTV), and 365 to 385 (YLCADGILLIYFMMDTNGFLK).

It belongs to the pannexin family.

It is found in the cell membrane. The protein localises to the cell junction. Its subcellular location is the gap junction. Structural component of the gap junctions. This chain is Innexin-14 (inx-14), found in Caenorhabditis elegans.